Consider the following 185-residue polypeptide: Acireductone dioxygenase (185 aa).

Fe(2+) contacts are provided by His97, His99, Glu103, and His141. Positions 97, 99, 103, and 141 each coordinate Ni(2+).

The protein belongs to the acireductone dioxygenase (ARD) family. As to quaternary structure, monomer. Requires Fe(2+) as cofactor. The cofactor is Ni(2+).

The enzyme catalyses 1,2-dihydroxy-5-(methylsulfanyl)pent-1-en-3-one + O2 = 3-(methylsulfanyl)propanoate + CO + formate + 2 H(+). It carries out the reaction 1,2-dihydroxy-5-(methylsulfanyl)pent-1-en-3-one + O2 = 4-methylsulfanyl-2-oxobutanoate + formate + 2 H(+). The protein operates within amino-acid biosynthesis; L-methionine biosynthesis via salvage pathway; L-methionine from S-methyl-5-thio-alpha-D-ribose 1-phosphate: step 5/6. Its function is as follows. Catalyzes 2 different reactions between oxygen and the acireductone 1,2-dihydroxy-3-keto-5-methylthiopentene (DHK-MTPene) depending upon the metal bound in the active site. Fe-containing acireductone dioxygenase (Fe-ARD) produces formate and 2-keto-4-methylthiobutyrate (KMTB), the alpha-ketoacid precursor of methionine in the methionine recycle pathway. Ni-containing acireductone dioxygenase (Ni-ARD) produces methylthiopropionate, carbon monoxide and formate, and does not lie on the methionine recycle pathway. The polypeptide is Acireductone dioxygenase (Stenotrophomonas maltophilia (strain R551-3)).